The chain runs to 241 residues: Beta-nerve growth factor (241 aa).

The first 18 residues, 1–18 (MSMLFYTLITAFLIGIQA), serve as a signal peptide directing secretion. Positions 19-121 (EPHSESNVPA…PFNRTHRSKR (103 aa)) are excised as a propeptide. Residues asparagine 69 and asparagine 114 are each glycosylated (N-linked (GlcNAc...) asparagine). Disulfide bonds link cysteine 136-cysteine 201, cysteine 179-cysteine 229, and cysteine 189-cysteine 231. Positions 173 and 209 each coordinate a 1-acyl-sn-glycero-3-phospho-(1D-myo-inositol). A 1-acyl-sn-glycero-3-phospho-L-serine is bound at residue lysine 209.

It belongs to the NGF-beta family. As to quaternary structure, homodimer. The homodimer interacts with a single NTRK1 chain. The homodimer interacts with a single NGFR chain. The NGF dimer interacts with a single SORCS2 chain (via extracellular domain). The NGF precursor (proNGF) binds to a receptor complex formed by SORT1 and NGFR, which leads to NGF endocytosis. Both mature NGF and the immature NGF precursor (proNGF) interact with SORCS2 and with the heterodimer formed by SORCS2 and NGFR (via extracellular domains). The NGF precursor (proNGF) has much higher affinity for SORCS2 than mature NGF. The NGF precursor (proNGF) has much higher affinity for SORT1 than mature NGF. Interacts with ADAM10 in a divalent cation-dependent manner. Interaction with SORCS3.

The protein localises to the secreted. Its subcellular location is the endosome lumen. Nerve growth factor is important for the development and maintenance of the sympathetic and sensory nervous systems. Extracellular ligand for the NTRK1 and NGFR receptors, activates cellular signaling cascades to regulate neuronal proliferation, differentiation and survival. The immature NGF precursor (proNGF) functions as a ligand for the heterodimeric receptor formed by SORCS2 and NGFR, and activates cellular signaling cascades that lead to inactivation of RAC1 and/or RAC2, reorganization of the actin cytoskeleton and neuronal growth cone collapse. In contrast to mature NGF, the precursor form (proNGF) promotes neuronal apoptosis (in vitro). Inhibits metalloproteinase-dependent proteolysis of platelet glycoprotein VI. Binds lysophosphatidylinositol and lysophosphatidylserine between the two chains of the homodimer. The lipid-bound form promotes histamine relase from mast cells, contrary to the lipid-free form. The polypeptide is Beta-nerve growth factor (NGF) (Homo sapiens (Human)).